The following is a 52-amino-acid chain: Rubredoxin (52 aa).

In terms of domain architecture, Rubredoxin-like spans 1 to 52 (MKKYVCTVCGYEYDPAEGDPDNGVKPGTSFDDLPADWVCPVCGAPKSEFEAA). Fe cation is bound by residues Cys6, Cys9, Cys39, and Cys42.

This sequence belongs to the rubredoxin family. It depends on Fe(3+) as a cofactor.

It is found in the cytoplasm. Its function is as follows. Rubredoxin is a small nonheme, iron protein lacking acid-labile sulfide. Its single Fe, chelated to 4 Cys, functions as an electron acceptor and may also stabilize the conformation of the molecule. Electron acceptor for cytoplasmic lactate dehydrogenase. The protein is Rubredoxin (rub) of Nitratidesulfovibrio vulgaris (strain ATCC 29579 / DSM 644 / CCUG 34227 / NCIMB 8303 / VKM B-1760 / Hildenborough) (Desulfovibrio vulgaris).